Reading from the N-terminus, the 570-residue chain is PTS system lactose-specific EIICB component (570 aa).

Positions 9 to 410 constitute a PTS EIIC type-3 domain; that stretch reads IEKGKPFFEK…VVDIIIYYPF (402 aa). 9 helical membrane-spanning segments follow: residues 31-51, 65-85, 104-124, 133-153, 178-198, 223-243, 283-303, 340-360, and 382-402; these read GFIS…IAYV, AILM…VAGT, INFI…ASDP, AFMG…TVIV, FKDL…DLVI, GWIG…VGIH, MFIV…MFMW, VFFI…KLFV, and IIMG…LIVV. In terms of domain architecture, PTS EIIB type-3 spans 467-570; sequence QTNVLVLCAG…LDFVQQQFEN (104 aa). The active-site Phosphocysteine intermediate; for EIIB activity is cysteine 474. Cysteine 474 is subject to Phosphocysteine; by EIIA.

It localises to the cell membrane. It carries out the reaction lactose(out) + N(pros)-phospho-L-histidyl-[protein] = lactose 6-phosphate(in) + L-histidyl-[protein]. The phosphoenolpyruvate-dependent sugar phosphotransferase system (sugar PTS), a major carbohydrate active transport system, catalyzes the phosphorylation of incoming sugar substrates concomitantly with their translocation across the cell membrane. The enzyme II LacEF PTS system is involved in lactose transport. The protein is PTS system lactose-specific EIICB component of Staphylococcus aureus (strain MSSA476).